Consider the following 488-residue polypeptide: ATP synthase subunit beta (488 aa).

164–171 serves as a coordination point for ATP; the sequence is GGAGMGKT.

Belongs to the ATPase alpha/beta chains family. In terms of assembly, F-type ATPases have 2 components, CF(1) - the catalytic core - and CF(0) - the membrane proton channel. CF(1) has five subunits: alpha(3), beta(3), gamma(1), delta(1), epsilon(1). CF(0) has four main subunits: a(1), b(1), b'(1) and c(9-12).

The protein resides in the cellular thylakoid membrane. The enzyme catalyses ATP + H2O + 4 H(+)(in) = ADP + phosphate + 5 H(+)(out). Functionally, produces ATP from ADP in the presence of a proton gradient across the membrane. The catalytic sites are hosted primarily by the beta subunits. In Synechococcus sp. (strain RCC307), this protein is ATP synthase subunit beta.